The chain runs to 1179 residues: MIWCLRLTILSLILSQGADGRRKPEVVSVVGRAGESAVLGCDLLPPAGRPPLHVIEWLRFGFLLPIFIQFGLYSPRIDPDYVGRVRLQTGASLQIEGLRVEDQGWYECRVLFLDQHSPEQDFANGSWVHLTVNSPPQFQETPPLVLEVKELEAVTLRCVALGSPQPYVTWKFRGQDLGKGQGQVQVRNGTLWIRRVERGSAGDYTCQASSTEGSVTHTTQLLVLGPPVIVVPPNNNTVNASQDVSLACRAEAYPANLTYSWFQDRINVFHISRLQSRVRILVDGSLWLQATQPDDAGHYTCVPSNGFPHPPSASAYLTVLYPAQVTVMPPETPLPIGMRGVIRCPVRANPPLLFVTWTKDGQALQLDKFPGWSLGPEGSLVIALGNEDALGEYSCTPYNSLGTAGSSPVTRVLLKAPPAFIDQPKEEYFQEVGRDLLIPCSARGDPPPIVSWAKVGRGLQGQAQVDSNNSLILRPLTKEAHGRWECSARNAVAHVTISTNVYVLGTSPHVVTNVSVVPLPKGANVSWEPGFDGGYLQRFSVWYTPLAKRPDRAHHDWVSLAVPMGATHLLVPGLQAYTQYQFSVLAQNKLGSGPFSEIVLSIPEGLPTTPAVPRLPPTEMPPPLSPPRGLVAVRTPRGVLLHWDPPELIPERLDGYILEGRQGSQGWEILDQGVAGTEIQLLVPGLIKDVLYEFRLVAFADSYVSDPSNIANISTSGLEVYPSRTQLPGLLPQPVLAGVVGGVCFLGVAVLVSILAACLMNRRRAARRHRKRLRQDPPLIFSPRGRSGPHSAPGSDSPDSVTKFKLQGSPVPSLRQSLLWGEPARPPSPHPDSPLGRGPLPLEPICRGPDGRFVMGPTVAPPQEKLCLERSEPRTSAKRLAQSLDCSSSSPSGVPQPLCITDISPVGQPPAAMPSPLPGPGPLLQYLSLPFFREMNVDGDWPPLEEPTPASPPDFMGSHPCPTSSFLPPPDSPPTNLRAVLPGTLMGVGVSSEPPYTALADWTLRERVLPGLLSAAPRGSLTSQSSGRGSASFLRPPSTAPSAGGSYLSPAPGDTSSWASGPERWPRREHVVTVSKRRNTSVDENYEWDSEFPGDMELLETWHPGLASSRAHPELEPELGVKTPEKSCLLNTTHAPGPEARCAALREEFLAFRRRRDATRARLPVCQQSISYPEQATLL.

The N-terminal stretch at 1-20 is a signal peptide; the sequence is MIWCLRLTILSLILSQGADG. Residues 21 to 734 lie on the Extracellular side of the membrane; it reads RRKPEVVSVV…TQLPGLLPQP (714 aa). Ig-like domains lie at 24-124, 136-216, 226-318, 322-410, and 418-498; these read PEVV…DFAN, PQFQ…GSVT, PPVI…AYLT, PAQV…SPVT, and PAFI…VTIS. 5 disulfides stabilise this stretch: C41/C108, C158/C206, C248/C301, C344/C395, and C440/C486. N188 is a glycosylation site (N-linked (GlcNAc...) asparagine). Fibronectin type-III domains follow at residues 507–611 and 623–718; these read SPHV…TTPA and PLSP…TSGL. 2 N-linked (GlcNAc...) asparagine glycosylation sites follow: N513 and N524. A helical transmembrane segment spans residues 735 to 755; the sequence is VLAGVVGGVCFLGVAVLVSIL. Topologically, residues 756-1179 are cytoplasmic; the sequence is AACLMNRRRA…ISYPEQATLL (424 aa). Positions 766–807 are disordered; it reads ARRHRKRLRQDPPLIFSPRGRSGPHSAPGSDSPDSVTKFKLQ. The residue at position 809 (S809) is a Phosphoserine. Disordered regions lie at residues 819-846, 869-895, 942-979, and 1016-1079; these read LWGEPARPPSPHPDSPLGRGPLPLEPIC, ERSEPRTSAKRLAQSLDCSSSSPSGVP, PPLEEPTPASPPDFMGSHPCPTSSFLPPPDSPPTNLRA, and APRG…KRRN. Over residues 884-893 the composition is skewed to polar residues; that stretch reads LDCSSSSPSG. Polar residues predominate over residues 1020-1029; that stretch reads SLTSQSSGRG. The short motif at 1177–1179 is the PDZ-binding element; it reads TLL.

It belongs to the immunoglobulin superfamily. Turtle family. In terms of assembly, interacts with SHANK1 and probably with MAGI2. In terms of tissue distribution, expressed in hippocampal neurons (at protein level).

Its subcellular location is the cell membrane. The protein resides in the synapse. Functionally, functions in dendrite outgrowth and synapse maturation. In Rattus norvegicus (Rat), this protein is Protein turtle homolog A (Igsf9).